The chain runs to 182 residues: pEARLI1-like lipid transfer protein 2 (182 aa).

Residues 1–25 (MASKNSASLALFFALNILFFTLTAG) form the signal peptide. Over residues 33-92 (SPKPRPLPNPKVPSPKVPTPSVPSPYVPTPSVPSPSVPTPSVPSPSVPSPNPTPVIPPRT) the composition is skewed to pro residues. A disordered region spans residues 33-94 (SPKPRPLPNP…TPVIPPRTPG (62 aa)). A run of 7 repeats spans residues 42–46 (PKVPS), 47–51 (PKVPT), 52–56 (PSVPS), 62–66 (PSVPS), 67–71 (PSVPT), 72–76 (PSVPS), and 77–81 (PSVPS). Residues 42 to 81 (PKVPSPKVPTPSVPSPYVPTPSVPSPSVPTPSVPSPSVPS) form a 7 X 5 AA repeats of P-[KS]-V-P-[ST] region.

Belongs to the plant LTP family. PEARLI1 subfamily.

Its subcellular location is the secreted. The protein resides in the cell wall. Probable lipid transfer protein (LTP). May improve freezing survival. Seems to control the flowering process and lignin synthesis. Confers resistance to Botrytis cinerea. The sequence is that of pEARLI1-like lipid transfer protein 2 from Arabidopsis thaliana (Mouse-ear cress).